A 206-amino-acid chain; its full sequence is GCN5-like protein acetyltransferase Rv2170 (206 aa).

The region spanning 44–205 (EHIRRRGWQA…AFAILGRTLP (162 aa)) is the N-acetyltransferase domain. The active-site Proton donor is tyrosine 176.

Belongs to the acetyltransferase family.

The catalysed reaction is L-lysyl-[protein] + acetyl-CoA = N(6)-acetyl-L-lysyl-[protein] + CoA + H(+). The enzyme catalyses propanoyl-CoA + L-lysyl-[protein] = N(6)-propanoyl-L-lysyl-[protein] + CoA + H(+). It catalyses the reaction succinyl-CoA + L-lysyl-[protein] = N(6)-succinyl-L-lysyl-[protein] + CoA + H(+). Functionally, acetyltransferase involved in the post-translational regulation of the central metabolic enzyme isocitrate dehydrogenase 1 (ICDH-1) through lysine acetylation. Catalyzes the acetylation of ICDH-1 at Lys-30 and Lys-129, using acetyl-CoA as a donor, leading to a reduction of ICDH-1 enzyme activity. Can also use propionyl-CoA and succinyl-CoA as donors. Cannot act on the isocitrate dehydrogenase 2 (ICDH-2). Might play a role in regulating the TCA cycle and methylcitrate cycle when M.tuberculosis utilizes fatty acid as carbon source. Its function is as follows. In addition, it can acetylate the amino group of isoniazid (INH), one of the first-line drugs used for the treatment of tuberculosis, thereby canceling out the drug toxicity. Acts by catalyzing the transfer of an acetyl group from acetyl-CoA to INH. Following acetylation, INH is broken down into isonicotinic acid and acetylhydrazine. M.smegmatis and M.tuberculosis H37Ra strains overexpressing Rv2170 are resistant to INH. Has little or no acetyltransferase activity with other antibiotics such as streptomycin, neomycin, kanamycin, amikacin, apramycin and gentamicin. The chain is GCN5-like protein acetyltransferase Rv2170 from Mycobacterium tuberculosis (strain ATCC 25618 / H37Rv).